We begin with the raw amino-acid sequence, 869 residues long: Valine--tRNA ligase (869 aa).

Residues 47–57 (PYPTGNFHIGN) carry the 'HIGH' region motif. Residues 521 to 525 (KMSKS) carry the 'KMSKS' region motif. Lysine 524 serves as a coordination point for ATP.

Belongs to the class-I aminoacyl-tRNA synthetase family. ValS type 2 subfamily.

It is found in the cytoplasm. The enzyme catalyses tRNA(Val) + L-valine + ATP = L-valyl-tRNA(Val) + AMP + diphosphate. Catalyzes the attachment of valine to tRNA(Val). As ValRS can inadvertently accommodate and process structurally similar amino acids such as threonine, to avoid such errors, it has a 'posttransfer' editing activity that hydrolyzes mischarged Thr-tRNA(Val) in a tRNA-dependent manner. The sequence is that of Valine--tRNA ligase from Methanosarcina mazei (strain ATCC BAA-159 / DSM 3647 / Goe1 / Go1 / JCM 11833 / OCM 88) (Methanosarcina frisia).